Reading from the N-terminus, the 153-residue chain is MTHDNKLQVEAIKRGTVIDHIPAQIGFKLLSLFKLTETDQRITIGLNLPSGEMGRKDLIKIENTFLSEEQVDQLALYAPQATVNRIDNYEVVGKSRPSLPERIDNVLVCPNSNCISHAEPVSSSFAVRKRANDIALKCKYCEKEFSHNVVLAN.

Zn(2+) is bound by residues cysteine 109, cysteine 114, cysteine 138, and cysteine 141.

This sequence belongs to the PyrI family. In terms of assembly, contains catalytic and regulatory chains. Zn(2+) is required as a cofactor.

Its function is as follows. Involved in allosteric regulation of aspartate carbamoyltransferase. The chain is Aspartate carbamoyltransferase regulatory chain from Shigella flexneri serotype 5b (strain 8401).